The chain runs to 127 residues: DNA-directed RNA polymerases I, II, and III subunit RPABC2 (127 aa).

The segment covering 1–32 has biased composition (acidic residues); it reads MSDNEDNFDGDDFDDVEEDEGLDDLENAEEEG. The disordered stretch occupies residues 1-52; it reads MSDNEDNFDGDDFDDVEEDEGLDDLENAEEEGQVNVEILPSGERPQANQKRI. N-acetylserine is present on S2. The residue at position 2 (S2) is a Phosphoserine; by CK2.

This sequence belongs to the archaeal Rpo6/eukaryotic RPB6 RNA polymerase subunit family. As to quaternary structure, component of the RNA polymerase I (Pol I), RNA polymerase II (Pol II) and RNA polymerase III (Pol III) complexes consisting of at least 13, 12 and 17 subunits, respectively. Pol I complex consists of a ten-subunit catalytic core composed of POLR1A/RPA1, POLR1B/RPA2, POLR1C/RPAC1, POLR1D/RPAC2, POLR1H/RPA12, POLR2E/RPABC1, POLR2F/RPABC2, POLR2H/RPABC3, POLR2K/RPABC4 and POLR2L/RPABC5; a mobile stalk subunit POLR1F/RPA43 protruding from the core and additional subunits homologous to general transcription factors POLR1E/RPA49 and POLR1G/RPA34. Part of Pol I pre-initiation complex (PIC), in which Pol I core assembles with RRN3 and promoter-bound UTBF and SL1/TIF-IB complex. Pol II complex contains a ten-subunit catalytic core composed of POLR2A/RPB1, POLR2B/RPB2, POLR2C/RPB3, POLR2I/RPB9, POLR2J/RPB11, POLR2E/RPABC1, POLR2F/RPABC2, POLR2H/RPABC3, POLR2K/RPABC4 and POLR2L/RPABC5 and a mobile stalk composed of two subunits POLR2D/RPB4 and POLR2G/RPB7. Part of Pol II(G) complex, in which Pol II core associates with an additional subunit POLR2M; unlike conventional Pol II, Pol II(G) functions as a transcriptional repressor. Part of TBP-based Pol II pre-initiation complex (PIC), in which Pol II core assembles with general transcription factors and other specific initiation factors including GTF2E1, GTF2E2, GTF2F1, GTF2F2, TCEA1, ERCC2, ERCC3, GTF2H2, GTF2H3, GTF2H4, GTF2H5, GTF2A1, GTF2A2, GTF2B and TBP; this large multi-subunit PIC complex mediates DNA unwinding and targets Pol II core to the transcription start site where the first phosphodiester bond forms. Pol III complex consists of a ten-subunit catalytic core composed of POLR3A/RPC1, POLR3B/RPC2, POLR1C/RPAC1, POLR1D/RPAC2, POLR3K/RPC10, POLR2E/RPABC1, POLR2F/RPABC2, POLR2H/RPABC3, POLR2K/RPABC4 and POLR2L/RPABC5; a mobile stalk composed of two subunits POLR3H/RPC8 and CRCP/RPC9, protruding from the core and functioning primarily in transcription initiation; and additional subunits homologous to general transcription factors of the RNA polymerase II machinery, POLR3C/RPC3-POLR3F/RPC6-POLR3G/RPC7 heterotrimer required for transcription initiation and POLR3D/RPC4-POLR3E/RPC5 heterodimer involved in both transcription initiation and termination.

It localises to the nucleus. Its subcellular location is the nucleolus. DNA-dependent RNA polymerase catalyzes the transcription of DNA into RNA using the four ribonucleoside triphosphates as substrates. Common component of RNA polymerases I, II, and III which synthesize ribosomal RNA precursors, mRNA precursors and many functional non-coding RNAs, and small RNAs, such as 5S rRNA and tRNAs, respectively. Pol II is the central component of the basal RNA polymerase II transcription machinery. Pols are composed of mobile elements that move relative to each other. In Pol II, POLR2F/RPABC2 is part of the clamp element and together with parts of POLR2A/RPB1 and POLR2B/RPB2 forms a pocket to which the POLR2D/RPB4-POLR2G/RPB7 subcomplex binds. In Bos taurus (Bovine), this protein is DNA-directed RNA polymerases I, II, and III subunit RPABC2 (POLR2F).